Consider the following 277-residue polypeptide: Undecaprenyl-diphosphatase (277 aa).

6 helical membrane-spanning segments follow: residues M88–D108, M117–V137, F157–L179, S191–V211, L227–V247, and F255–I275.

Belongs to the UppP family.

The protein localises to the cell membrane. The enzyme catalyses di-trans,octa-cis-undecaprenyl diphosphate + H2O = di-trans,octa-cis-undecaprenyl phosphate + phosphate + H(+). Functionally, catalyzes the dephosphorylation of undecaprenyl diphosphate (UPP). Confers resistance to bacitracin. This Paenarthrobacter aurescens (strain TC1) protein is Undecaprenyl-diphosphatase.